A 282-amino-acid chain; its full sequence is (4-alkanoyl-5-oxo-2,5-dihydrofuran-3-yl)methyl phosphate reductase (282 aa).

Position 6–11 (6–11 (GATGAV)) interacts with NADP(+).

Belongs to the NmrA-type oxidoreductase family.

The catalysed reaction is a [(3S,4R)-4-alkanoyl-5-oxooxolan-3-yl]methyl phosphate + NADP(+) = a (4-alkanoyl-5-oxo-2,5-dihydrofuran-3-yl)methyl phosphate + NADPH + H(+). The enzyme catalyses [(3S,4R)-4-(6-methylheptanoyl)-5-oxooxolan-3-yl]methyl phosphate + NADP(+) = [4-(6-methylheptanoyl)-5-oxo-2H-furan-3-yl]methyl phosphate + NADPH + H(+). Functionally, involved in the biosynthesis of A factor (2-isocapryloyl-3R-hydroxymethyl-gamma-butyrolactone), a gamma-butyrolactone autoregulator that triggers secondary metabolism and morphogenesis in Streptomyces. Catalyzes the reduction of the butenolide phosphate produced by nonenzymatic intramolecular condensation of the 8-methyl-3-oxononanoyl-DHAP ester. This Streptomyces griseus subsp. griseus (strain JCM 4626 / CBS 651.72 / NBRC 13350 / KCC S-0626 / ISP 5235) protein is (4-alkanoyl-5-oxo-2,5-dihydrofuran-3-yl)methyl phosphate reductase.